A 296-amino-acid chain; its full sequence is Tubulin polyglutamylase complex subunit 2 (296 aa).

The interval 257 to 296 (KILIPKKKGPVQPVSGQKGPGPLAPPTSKPSAGCGNPVRK) is disordered.

In terms of assembly, part of the neuronal tubulin polyglutamylase complex which contains TPGS1, TPGS2, TTLL1, LRRC49 and NICN1. Interacts with CSTPP1 and LRRC49.

It localises to the cytoplasm. Its subcellular location is the cytoskeleton. The protein resides in the microtubule organizing center. The protein localises to the centrosome. It is found in the centriolar satellite. Functionally, subunit of the tubulin polyglutamylase complex (TPGC). The complex mediates cilia and flagella polyglutamylation which is essential for their biogenesis and motility. The sequence is that of Tubulin polyglutamylase complex subunit 2 (Tpgs2) from Rattus norvegicus (Rat).